A 676-amino-acid chain; its full sequence is RNA helicase NPH-II (676 aa).

Positions 172–347 (FSAWISHRPV…VFLPNPAFIH (176 aa)) constitute a Helicase ATP-binding domain. Residue 185 to 192 (GGTGVGKT) participates in ATP binding. Residues 296–299 (DEVH) carry the DEXH box motif. One can recognise a Helicase C-terminal domain in the interval 366–535 (NPSSRMAYIE…NYILYANKFN (170 aa)).

It belongs to the DEAD box helicase family. DEAH subfamily. In terms of assembly, monomer.

Its subcellular location is the virion. It carries out the reaction ATP + H2O = ADP + phosphate + H(+). In terms of biological role, NTP-dependent helicase that catalyzes unidirectional unwinding of 3'tailed duplex RNAs and plays an important role during transcription of early mRNAs, presumably by preventing R-loop formation behind the elongating RNA polymerase. Might also play a role in the export of newly synthesized mRNA chains out of the core into the cytoplasm. Required for replication and propagation of viral particles. The protein is RNA helicase NPH-II (OPG084) of Vaccinia virus (strain Ankara) (VACV).